Here is a 164-residue protein sequence, read N- to C-terminus: FMN reductase (NADH) RutF (164 aa).

It belongs to the non-flavoprotein flavin reductase family. RutF subfamily.

The catalysed reaction is FMNH2 + NAD(+) = FMN + NADH + 2 H(+). Functionally, catalyzes the reduction of FMN to FMNH2 which is used to reduce pyrimidine by RutA via the Rut pathway. This is FMN reductase (NADH) RutF from Enterobacter cloacae subsp. cloacae (strain ATCC 13047 / DSM 30054 / NBRC 13535 / NCTC 10005 / WDCM 00083 / NCDC 279-56).